The sequence spans 459 residues: Bifunctional protein GlmU (459 aa).

Residues 1 to 230 (MVKRYAVILA…FDETIGINDR (230 aa)) form a pyrophosphorylase region. Residues 9 to 12 (LAAG), Lys23, Gln73, and 78 to 79 (GT) each bind UDP-N-acetyl-alpha-D-glucosamine. Asp103 serves as a coordination point for Mg(2+). UDP-N-acetyl-alpha-D-glucosamine is bound by residues Gly140, Glu155, Asn170, and Asn228. Asn228 is a Mg(2+) binding site. Positions 231–251 (IALAEAERIMRDRICRQHMKN) are linker. Residues 252–459 (GVTIIDPACT…VDRLRGKKKS (208 aa)) form an N-acetyltransferase region. UDP-N-acetyl-alpha-D-glucosamine-binding residues include Arg333 and Lys351. The Proton acceptor role is filled by His363. 2 residues coordinate UDP-N-acetyl-alpha-D-glucosamine: Tyr366 and Asn377. Acetyl-CoA contacts are provided by residues 386 to 387 (NY), Ala423, and Arg440.

This sequence in the N-terminal section; belongs to the N-acetylglucosamine-1-phosphate uridyltransferase family. The protein in the C-terminal section; belongs to the transferase hexapeptide repeat family. Homotrimer. The cofactor is Mg(2+).

Its subcellular location is the cytoplasm. The enzyme catalyses alpha-D-glucosamine 1-phosphate + acetyl-CoA = N-acetyl-alpha-D-glucosamine 1-phosphate + CoA + H(+). It carries out the reaction N-acetyl-alpha-D-glucosamine 1-phosphate + UTP + H(+) = UDP-N-acetyl-alpha-D-glucosamine + diphosphate. It participates in nucleotide-sugar biosynthesis; UDP-N-acetyl-alpha-D-glucosamine biosynthesis; N-acetyl-alpha-D-glucosamine 1-phosphate from alpha-D-glucosamine 6-phosphate (route II): step 2/2. It functions in the pathway nucleotide-sugar biosynthesis; UDP-N-acetyl-alpha-D-glucosamine biosynthesis; UDP-N-acetyl-alpha-D-glucosamine from N-acetyl-alpha-D-glucosamine 1-phosphate: step 1/1. The protein operates within bacterial outer membrane biogenesis; LPS lipid A biosynthesis. Catalyzes the last two sequential reactions in the de novo biosynthetic pathway for UDP-N-acetylglucosamine (UDP-GlcNAc). The C-terminal domain catalyzes the transfer of acetyl group from acetyl coenzyme A to glucosamine-1-phosphate (GlcN-1-P) to produce N-acetylglucosamine-1-phosphate (GlcNAc-1-P), which is converted into UDP-GlcNAc by the transfer of uridine 5-monophosphate (from uridine 5-triphosphate), a reaction catalyzed by the N-terminal domain. The chain is Bifunctional protein GlmU from Geobacillus thermodenitrificans (strain NG80-2).